The primary structure comprises 394 residues: Acetate kinase (394 aa).

N10 lines the Mg(2+) pocket. K17 serves as a coordination point for ATP. Substrate is bound at residue R87. D144 (proton donor/acceptor) is an active-site residue. Residues 204-208, 279-281, and 327-331 each bind ATP; these read HLGNG, DMR, and GIGEN. E381 is a Mg(2+) binding site.

Belongs to the acetokinase family. In terms of assembly, homodimer. Mg(2+) serves as cofactor. Requires Mn(2+) as cofactor.

Its subcellular location is the cytoplasm. The catalysed reaction is acetate + ATP = acetyl phosphate + ADP. It participates in metabolic intermediate biosynthesis; acetyl-CoA biosynthesis; acetyl-CoA from acetate: step 1/2. Catalyzes the formation of acetyl phosphate from acetate and ATP. Can also catalyze the reverse reaction. The protein is Acetate kinase of Pseudomonas aeruginosa (strain LESB58).